The primary structure comprises 245 residues: Phosphoadenosine 5'-phosphosulfate reductase (245 aa).

C239 (nucleophile; cysteine thiosulfonate intermediate) is an active-site residue.

The protein belongs to the PAPS reductase family. CysH subfamily.

It is found in the cytoplasm. The catalysed reaction is [thioredoxin]-disulfide + sulfite + adenosine 3',5'-bisphosphate + 2 H(+) = [thioredoxin]-dithiol + 3'-phosphoadenylyl sulfate. The protein operates within sulfur metabolism; hydrogen sulfide biosynthesis; sulfite from sulfate: step 3/3. Its function is as follows. Catalyzes the formation of sulfite from phosphoadenosine 5'-phosphosulfate (PAPS) using thioredoxin as an electron donor. The protein is Phosphoadenosine 5'-phosphosulfate reductase of Alkalilimnicola ehrlichii (strain ATCC BAA-1101 / DSM 17681 / MLHE-1).